Here is a 396-residue protein sequence, read N- to C-terminus: S-adenosylmethionine synthase 2 (396 aa).

Residue Glu-13 coordinates Mg(2+). His-19 contributes to the ATP binding site. Residue Glu-47 participates in K(+) binding. 2 residues coordinate L-methionine: Glu-60 and Gln-103. Residues 171–173 (DGK), 239–242 (SGRF), Asp-250, 256–257 (RK), Ala-273, Lys-277, and Lys-281 each bind ATP. Asp-250 serves as a coordination point for L-methionine. Position 281 (Lys-281) interacts with L-methionine.

This sequence belongs to the AdoMet synthase family. Homotetramer. The cofactor is Mn(2+). It depends on Mg(2+) as a cofactor. Co(2+) serves as cofactor. K(+) is required as a cofactor. As to expression, expressed in roots, stems and leaves (at protein level).

Its subcellular location is the cytoplasm. The catalysed reaction is L-methionine + ATP + H2O = S-adenosyl-L-methionine + phosphate + diphosphate. It participates in amino-acid biosynthesis; S-adenosyl-L-methionine biosynthesis; S-adenosyl-L-methionine from L-methionine: step 1/1. Catalyzes the formation of S-adenosylmethionine from methionine and ATP. The reaction comprises two steps that are both catalyzed by the same enzyme: formation of S-adenosylmethionine (AdoMet) and triphosphate, and subsequent hydrolysis of the triphosphate. May be involved in the synthesis of betain in response to abiotic stress such as high salinity. This chain is S-adenosylmethionine synthase 2 (SAMS2), found in Atriplex nummularia (Old man saltbush).